A 194-amino-acid chain; its full sequence is Probable chorismate pyruvate-lyase (194 aa).

Substrate is bound by residues arginine 77, leucine 115, and glutamate 176.

It belongs to the UbiC family.

It is found in the cytoplasm. The catalysed reaction is chorismate = 4-hydroxybenzoate + pyruvate. It participates in cofactor biosynthesis; ubiquinone biosynthesis. Removes the pyruvyl group from chorismate, with concomitant aromatization of the ring, to provide 4-hydroxybenzoate (4HB) for the ubiquinone pathway. The sequence is that of Probable chorismate pyruvate-lyase from Cupriavidus pinatubonensis (strain JMP 134 / LMG 1197) (Cupriavidus necator (strain JMP 134)).